We begin with the raw amino-acid sequence, 350 residues long: ADP-ribose pyrophosphatase, mitochondrial (350 aa).

The N-terminal 46 residues, 1 to 46 (MAGRSLGKAVATVSLSVALASVTVRSSGCRAIPAPRNPFPSCGFHL), are a transit peptide targeting the mitochondrion. 2 disordered regions span residues 53–77 (GSNG…KVER) and 116–153 (SESS…PAGR). Ser121 carries the post-translational modification Phosphoserine. Residues 124–135 (FNEKDGHVERKS) show a composition bias toward basic and acidic residues. Residues 178–334 (WKRDESGNKI…SQFIKLVAEK (157 aa)) enclose the Nudix hydrolase domain. The short motif at 215 to 237 (GMVDPGEKISATLKREFGEEALN) is the Nudix box element.

It belongs to the Nudix hydrolase family. NudF subfamily. Monomer. Interacts with GLOD4. Mg(2+) serves as cofactor. It depends on Mn(2+) as a cofactor.

The protein resides in the mitochondrion. It catalyses the reaction ADP-D-ribose + H2O = D-ribose 5-phosphate + AMP + 2 H(+). Functionally, hydrolyzes ADP-ribose (ADPR) to AMP and ribose 5'-phosphate. This Rattus norvegicus (Rat) protein is ADP-ribose pyrophosphatase, mitochondrial (Nudt9).